The chain runs to 597 residues: Elongation factor 4 (597 aa).

A tr-type G domain is found at 2-184; it reads KHIRNFSIIA…EIVARIPAPV (183 aa). GTP is bound by residues 14 to 19 and 131 to 134; these read DHGKST and NKID.

Belongs to the TRAFAC class translation factor GTPase superfamily. Classic translation factor GTPase family. LepA subfamily.

The protein localises to the cell inner membrane. It carries out the reaction GTP + H2O = GDP + phosphate + H(+). Required for accurate and efficient protein synthesis under certain stress conditions. May act as a fidelity factor of the translation reaction, by catalyzing a one-codon backward translocation of tRNAs on improperly translocated ribosomes. Back-translocation proceeds from a post-translocation (POST) complex to a pre-translocation (PRE) complex, thus giving elongation factor G a second chance to translocate the tRNAs correctly. Binds to ribosomes in a GTP-dependent manner. This is Elongation factor 4 from Aeromonas salmonicida (strain A449).